The chain runs to 235 residues: Purine nucleoside phosphorylase DeoD-type (235 aa).

His4 contacts a purine D-ribonucleoside. Residues Gly20, Arg24, Arg43, and 87 to 90 (RVGT) each bind phosphate. Residues Glu162, 179-181 (EME), and 203-204 (SD) each bind a purine D-ribonucleoside. Catalysis depends on Asp204, which acts as the Proton donor.

The protein belongs to the PNP/UDP phosphorylase family. In terms of assembly, homohexamer; trimer of homodimers.

The catalysed reaction is a purine D-ribonucleoside + phosphate = a purine nucleobase + alpha-D-ribose 1-phosphate. It catalyses the reaction a purine 2'-deoxy-D-ribonucleoside + phosphate = a purine nucleobase + 2-deoxy-alpha-D-ribose 1-phosphate. Catalyzes the reversible phosphorolytic breakdown of the N-glycosidic bond in the beta-(deoxy)ribonucleoside molecules, with the formation of the corresponding free purine bases and pentose-1-phosphate. This Bacillus anthracis (strain CDC 684 / NRRL 3495) protein is Purine nucleoside phosphorylase DeoD-type.